Reading from the N-terminus, the 369-residue chain is 4-hydroxy-3-methylbut-2-en-1-yl diphosphate synthase (flavodoxin) (369 aa).

[4Fe-4S] cluster contacts are provided by cysteine 270, cysteine 273, cysteine 305, and glutamate 312.

The protein belongs to the IspG family. The cofactor is [4Fe-4S] cluster.

The catalysed reaction is (2E)-4-hydroxy-3-methylbut-2-enyl diphosphate + oxidized [flavodoxin] + H2O + 2 H(+) = 2-C-methyl-D-erythritol 2,4-cyclic diphosphate + reduced [flavodoxin]. It participates in isoprenoid biosynthesis; isopentenyl diphosphate biosynthesis via DXP pathway; isopentenyl diphosphate from 1-deoxy-D-xylulose 5-phosphate: step 5/6. Functionally, converts 2C-methyl-D-erythritol 2,4-cyclodiphosphate (ME-2,4cPP) into 1-hydroxy-2-methyl-2-(E)-butenyl 4-diphosphate. The chain is 4-hydroxy-3-methylbut-2-en-1-yl diphosphate synthase (flavodoxin) from Pseudomonas fluorescens (strain ATCC BAA-477 / NRRL B-23932 / Pf-5).